Consider the following 171-residue polypeptide: Peptide methionine sulfoxide reductase MsrA (171 aa).

The active site involves Cys13.

The protein belongs to the MsrA Met sulfoxide reductase family.

It catalyses the reaction L-methionyl-[protein] + [thioredoxin]-disulfide + H2O = L-methionyl-(S)-S-oxide-[protein] + [thioredoxin]-dithiol. It carries out the reaction [thioredoxin]-disulfide + L-methionine + H2O = L-methionine (S)-S-oxide + [thioredoxin]-dithiol. Has an important function as a repair enzyme for proteins that have been inactivated by oxidation. Catalyzes the reversible oxidation-reduction of methionine sulfoxide in proteins to methionine. The protein is Peptide methionine sulfoxide reductase MsrA of Mycobacterium sp. (strain MCS).